A 166-amino-acid polypeptide reads, in one-letter code: MALRLEDKKAIVAEVNEAAKGALSAVAADSRGVTVGAMTGLRKKAREAGVYVRVVRNTLARRAVEGTAFECLAETFTGPTLIAFSNEHPGAAARLLKDFAKEQANFEVKGAAFEGNFIPAADIDRLAKLPTYEEALAQLMMTMKEASAGKFVRTLAALRDQKQEAA.

It belongs to the universal ribosomal protein uL10 family. As to quaternary structure, part of the ribosomal stalk of the 50S ribosomal subunit. The N-terminus interacts with L11 and the large rRNA to form the base of the stalk. The C-terminus forms an elongated spine to which L12 dimers bind in a sequential fashion forming a multimeric L10(L12)X complex.

Its function is as follows. Forms part of the ribosomal stalk, playing a central role in the interaction of the ribosome with GTP-bound translation factors. In Shewanella oneidensis (strain ATCC 700550 / JCM 31522 / CIP 106686 / LMG 19005 / NCIMB 14063 / MR-1), this protein is Large ribosomal subunit protein uL10.